Reading from the N-terminus, the 37-residue chain is TIINVKCTSPKQCVPACKAAMGTVRAKCINGKCKCYI.

Cystine bridges form between cysteine 7-cysteine 28, cysteine 13-cysteine 33, and cysteine 17-cysteine 35.

Belongs to the short scorpion toxin superfamily. Potassium channel inhibitor family. Alpha-KTx 02 subfamily. Expressed by the venom gland.

Its subcellular location is the secreted. Its function is as follows. Reversibly blocks hKv1.1/KCNA1 (50% inhibition of current at 1 uM). Seems not to be voltage-dependent. This is Potassium channel toxin alpha-KTx 2.14 from Heteroctenus garridoi (Cuban scorpion).